Here is a 249-residue protein sequence, read N- to C-terminus: 3-deoxy-D-manno-octulosonic acid kinase (249 aa).

The active site involves Asp175.

The protein belongs to the protein kinase superfamily. KdkA/RfaP family.

The protein resides in the cell inner membrane. It carries out the reaction an alpha-Kdo-(2-&gt;6)-lipid IVA + ATP = a 4-O-phospho-alpha-Kdo-(2-&gt;6)-lipid IVA + ADP + H(+). The protein operates within bacterial outer membrane biogenesis; LPS core biosynthesis. In terms of biological role, catalyzes the ATP-dependent phosphorylation of the 3-deoxy-D-manno-octulosonic acid (Kdo) residue in Kdo-lipid IV(A) at the 4-OH position. In Xylella fastidiosa (strain M12), this protein is 3-deoxy-D-manno-octulosonic acid kinase.